Reading from the N-terminus, the 588-residue chain is MNNSINHKFHHISRAEYQELLAVSRGDAVADYIIDNVSILDLINAGEISGPIVIKGRYIAGVGAEYADTPALQRIDARGATAVPGFIDAHLHIESSMMTPVTFETATLPRGLTTVICDPHEIVNVMGEAGFAWFARCAEQARQNQYLQVSSCVPALEGCDVNGASFTLEQMLAWRDHPQVTGLAEMMDYPGVINGQNALLDKLDAFRYLTLDGHCPGLGGKELNAYIAAGIENCHESYQLEEGRRKLQLGMSLMIREGSAASNLNALAPLINEFNSPQCMLCTDDRNPWEIAHEGHIDALIRRLIEQHNVPLHVAYRVASWSTARHFGLNHLGLLAPGKQADIVLLSDARKVTVQQVLVKGEPIDAQTLQAEESARLALSAPPYGNTIARQPVSASDFALQFTPGKRYRVIDVIHNELITHSRSSVYSENGFDRDDVCFIAVLERYGQRLAPACGLLGGFGLNEGALAATVSHDSHNIVVIGRSAEEMALAVNQVIQDGGGLCVVRNGQVQSHLPLPIAGLMSTDTAQSLAEQIDALKAAARECGPLPDEPFIQMAFLSLPVIPALKLTSQGLFDGEKFAFTTLEVTE.

The protein belongs to the metallo-dependent hydrolases superfamily. Adenine deaminase family. Homodimer. The cofactor is Mn(2+).

It catalyses the reaction adenine + H2O + H(+) = hypoxanthine + NH4(+). The polypeptide is Adenine deaminase (Shigella flexneri).